Reading from the N-terminus, the 199-residue chain is Probable GTP-binding protein EngB (199 aa).

Residues 28-199 (DLPEIALAGR…DSWDAILEQV (172 aa)) form the EngB-type G domain. GTP-binding positions include 36–43 (GRSNVGKS), 63–67 (GKTQL), 81–84 (DVPG), 148–151 (TKAD), and 180–182 (FSS). Residues S43 and T65 each contribute to the Mg(2+) site.

The protein belongs to the TRAFAC class TrmE-Era-EngA-EngB-Septin-like GTPase superfamily. EngB GTPase family. The cofactor is Mg(2+).

In terms of biological role, necessary for normal cell division and for the maintenance of normal septation. The chain is Probable GTP-binding protein EngB from Streptococcus pyogenes serotype M3 (strain SSI-1).